Here is a 586-residue protein sequence, read N- to C-terminus: Retron Ec67 protein (586 aa).

In terms of domain architecture, Reverse transcriptase spans Phe29–Val262. Residues Asp120, Asp201, and Asp202 each coordinate Mg(2+).

This sequence belongs to the bacterial reverse transcriptase family.

It carries out the reaction DNA(n) + a 2'-deoxyribonucleoside 5'-triphosphate = DNA(n+1) + diphosphate. The enzyme catalyses Endonucleolytic cleavage to 5'-phosphomonoester.. Functionally, reverse transcriptase (RT) component of antiviral defense system retron Ec67, minimally composed of a non-coding RNA (ncRNA) and this RT. Expression of these 2 elements confers protection against bacteriophage T5. At multiplicity of infection (MOI) of 0.02 cultures grow normally when infected with T5 without collapsing, at MOI 2 cultures enter growth stasis. Responsible for synthesis of msDNA-Ec67 (a branched molecule with RNA linked by a 2',5'-phosphodiester bond to ssDNA). The retron transcript serves as primer (from a conserved internal G residue) and template for the reaction, and codes for the RT. Can use other retrons as substrate (msDNA-Mx162 and msDNA-Ec86). Also able to synthesize DNA from a DNA template at least in vitro, although the enzyme is less active with a DNA template. In Escherichia coli, this protein is Retron Ec67 protein.